A 445-amino-acid polypeptide reads, in one-letter code: Secretin receptor (445 aa).

The first 21 residues, 1-21 (MCPRPGPPLGLWLLLGFACAA), serve as a signal peptide directing secretion. The Extracellular portion of the chain corresponds to 22–137 (HLVGAPPRLC…HERQHAYLLK (116 aa)). Disulfide bonds link C44–C71, C62–C103, and C85–C119. N68, N96, N102, and N124 each carry an N-linked (GlcNAc...) asparagine glycan. A helical membrane pass occupies residues 138-163 (LKVMYTVGYSSSLVMLLVALGILCAF). The Cytoplasmic segment spans residues 164–170 (RRLHCTR). Residues 171-191 (NYIHMHLFLSFILRALSNFIK) form a helical membrane-spanning segment. Over 192–212 (DAVLFSSDDAIHCDAHRVGCK) the chain is Extracellular. Cysteines 211 and 281 form a disulfide. The helical transmembrane segment at 213-235 (LVMVFFQYCIMANYAWLLVEGLY) threads the bilayer. The Cytoplasmic portion of the chain corresponds to 236–250 (LHSLLVVSFFSERKC). Residues 251–272 (LQGFVVLGWGSPAMFVTSWAVT) form a helical membrane-spanning segment. The Extracellular segment spans residues 273-287 (RHFLEDSGCWDINAN). A helical transmembrane segment spans residues 288-311 (AAIWWVIRGPVILSILINFILFIN). At 312–336 (ILRILTRKLRTQETRGQDMNHYKRL) the chain is on the cytoplasmic side. The helical transmembrane segment at 337-352 (ARSTLLLIPLFGVHYI) threads the bilayer. Topologically, residues 353–363 (VFVFSPEGAME) are extracellular. A helical membrane pass occupies residues 364-387 (IQLFFELALGSFQGLVVAVLYCFL). Residues 388 to 445 (NGEVQLEVQKKWQQWHLWEPPLCPVALSSSFSNGTSSLNSTKACPSGRSRDTCKVSII) lie on the Cytoplasmic side of the membrane.

Belongs to the G-protein coupled receptor 2 family. Post-translationally, phosphorylated on Ser and Thr residues at the cytoplasmic C-terminus by G protein-coupled receptor kinases (GRKs).

It is found in the cell membrane. The protein localises to the basolateral cell membrane. Functionally, g protein-coupled receptor activated by secretin (SCT), which is involved in different processes such as regulation of the pH of the duodenal content, food intake and water homeostasis. Ligand binding causes a conformation change that triggers signaling via guanine nucleotide-binding proteins (G proteins) and activates cAMP-dependent pathway. Upon binding to secretin, regulates the pH of the duodenum by (1) inhibiting the secretion of gastric acid from the parietal cells of the stomach and (2) stimulating the production of bicarbonate (NaHCO(3)) from the ductal cells of the pancreas. In addition to regulating the pH of the duodenal content, plays a central role in diet induced thermogenesis: acts as a non-sympathetic brown fat (BAT) activator mediating prandial thermogenesis, which consequentially induces satiation. Mechanistically, secretin released by the gut after a meal binds to secretin receptor (SCTR) in brown adipocytes, activating brown fat thermogenesis by stimulating lipolysis, which is sensed in the brain and promotes satiation. Also able to stimulate lipolysis in white adipocytes. Also plays an important role in cellular osmoregulation by regulating renal water reabsorption. Also plays a role in the central nervous system: required for synaptic plasticity. The polypeptide is Secretin receptor (SCTR) (Oryctolagus cuniculus (Rabbit)).